The primary structure comprises 307 residues: UDP-3-O-acyl-N-acetylglucosamine deacetylase (307 aa).

Zn(2+) is bound by residues His-78, His-241, and Asp-245. His-268 functions as the Proton donor in the catalytic mechanism.

The protein belongs to the LpxC family. It depends on Zn(2+) as a cofactor.

The catalysed reaction is a UDP-3-O-[(3R)-3-hydroxyacyl]-N-acetyl-alpha-D-glucosamine + H2O = a UDP-3-O-[(3R)-3-hydroxyacyl]-alpha-D-glucosamine + acetate. It functions in the pathway glycolipid biosynthesis; lipid IV(A) biosynthesis; lipid IV(A) from (3R)-3-hydroxytetradecanoyl-[acyl-carrier-protein] and UDP-N-acetyl-alpha-D-glucosamine: step 2/6. Its function is as follows. Catalyzes the hydrolysis of UDP-3-O-myristoyl-N-acetylglucosamine to form UDP-3-O-myristoylglucosamine and acetate, the committed step in lipid A biosynthesis. The chain is UDP-3-O-acyl-N-acetylglucosamine deacetylase from Paracidovorax citrulli (strain AAC00-1) (Acidovorax citrulli).